The sequence spans 385 residues: MSEYLFTSESVSEGHPDKMADQISDAVLDAILAEDPRGRIACETMIKTGIIILGGEVTTSANIDYEAVARETVKRIGYKHHEMGFDGETCGVINILGKQSVDIAQGVDRDHPEEQGAGDQGLMFGYASNETDVLMPAPITYAHRLVQRQAEVRCNGQLPWLRPDAKSQVTLRYVDGRPVAVDTVVLSTQHAPDLTQAQVHEAVIEEIIKPVLPEQWITGETRYLVNPTGRFVIGGPVGDCGLTGRKIIVDTYGGMARHGGGCFSGKDPSKVDRSAAYACRYVAKNIVAAGLAERCEIQVSYAIGVAEPTSISVETFGTGRVDSEKLTRIVREHFDLRPYGILKMLDLIRPIYTATAAYGHFGREDEGFPWERIDRAEEIRDAAGL.

His-15 is an ATP binding site. Position 17 (Asp-17) interacts with Mg(2+). K(+) is bound at residue Glu-43. The L-methionine site is built by Glu-56 and Gln-99. Positions 99 to 109 are flexible loop; it reads QSVDIAQGVDR. Residues 164–166, 230–231, Asp-239, 245–246, and Lys-266 contribute to the ATP site; these read DAK, RF, and RK. Position 239 (Asp-239) interacts with L-methionine. Lys-270 contributes to the L-methionine binding site.

This sequence belongs to the AdoMet synthase family. Homotetramer; dimer of dimers. It depends on Mg(2+) as a cofactor. K(+) serves as cofactor.

Its subcellular location is the cytoplasm. The enzyme catalyses L-methionine + ATP + H2O = S-adenosyl-L-methionine + phosphate + diphosphate. Its pathway is amino-acid biosynthesis; S-adenosyl-L-methionine biosynthesis; S-adenosyl-L-methionine from L-methionine: step 1/1. In terms of biological role, catalyzes the formation of S-adenosylmethionine (AdoMet) from methionine and ATP. The overall synthetic reaction is composed of two sequential steps, AdoMet formation and the subsequent tripolyphosphate hydrolysis which occurs prior to release of AdoMet from the enzyme. The sequence is that of S-adenosylmethionine synthase from Alkalilimnicola ehrlichii (strain ATCC BAA-1101 / DSM 17681 / MLHE-1).